Consider the following 349-residue polypeptide: RING-H2 finger protein ATL48 (349 aa).

The HIG1 domain maps to Met1–Ser85. N-acetylserine is present on Ser2. Transmembrane regions (helical) follow at residues Pro21–Phe41, Ala55–Gly75, and Cys121–Phe141. The segment at Cys207–Arg249 adopts an RING-type; atypical zinc-finger fold.

It belongs to the RING-type zinc finger family. ATL subfamily.

It is found in the membrane. It catalyses the reaction S-ubiquitinyl-[E2 ubiquitin-conjugating enzyme]-L-cysteine + [acceptor protein]-L-lysine = [E2 ubiquitin-conjugating enzyme]-L-cysteine + N(6)-ubiquitinyl-[acceptor protein]-L-lysine.. It functions in the pathway protein modification; protein ubiquitination. The sequence is that of RING-H2 finger protein ATL48 (ATL48) from Arabidopsis thaliana (Mouse-ear cress).